Consider the following 73-residue polypeptide: MTLVGKLVHISIDLVLVSTCLAGIKRNTGLTPKLETLDNQTMRNYMKRYLNLGESVYDYSVATCGSSTYFARK.

It belongs to the ?ATG44? family. As to quaternary structure, homooligomer. Found as homooctamer in solution, but binds to membranes either as a monomer, dimer, or tetramer, not as an octamer.

It is found in the mitochondrion intermembrane space. The protein resides in the vacuole. Functionally, mitochondrial fission factor that acts directly on lipid membranes to drive mitochondrial fission required for mitophagy. Directly binds to lipid membranes and brings about lipid membrane fragility to facilitate membrane fission and engulfment of mitochondria by the phagophore. This Saccharomyces cerevisiae (strain ATCC 204508 / S288c) (Baker's yeast) protein is Mitofissin.